Reading from the N-terminus, the 394-residue chain is Shematrin-like protein 2 (394 aa).

The first 19 residues, 1–19 (MKPFISLASLIVLIASASA), serve as a signal peptide directing secretion.

As to expression, prismatic layer of shell (at protein level). Expressed primarily in the mantle with highest level in the mantle edge and lower level in the mantle pallium.

It is found in the secreted. The polypeptide is Shematrin-like protein 2 (Pinctada maxima (Silver-lipped pearl oyster)).